We begin with the raw amino-acid sequence, 665 residues long: Prelamin-A/C (665 aa).

N-acetylmethionine is present on M1. The interval 1–27 is disordered; the sequence is METPSQRRPTRSGAQASSTPLSPTRIT. The interval 1-33 is head; sequence METPSQRRPTRSGAQASSTPLSPTRITRLQEKE. The tract at residues 1–130 is interaction with MLIP; the sequence is METPSQRRPT…TKKEGDLLAA (130 aa). T3 carries the phosphothreonine modification. S5 carries the post-translational modification Phosphoserine. T10 carries the phosphothreonine modification. Residues S12 and S18 each carry the phosphoserine modification. T19 is subject to Phosphothreonine. Position 22 is a phosphoserine (S22). The 357-residue stretch at 31-387 folds into the IF rod domain; that stretch reads EKEDLQELND…KLLEGEEERL (357 aa). An N6-acetyllysine; alternate modification is found at K32. K32 carries the N6-succinyllysine; alternate modification. K32 is covalently cross-linked (Glycyl lysine isopeptide (Lys-Gly) (interchain with G-Cter in SUMO2); alternate). The tract at residues 34–70 is coil 1A; the sequence is DLQELNDRLAVYIDRVRSLETENAGLRLRITESEEVV. S51, S66, and S71 each carry phosphoserine. The linker 1 stretch occupies residues 71-80; the sequence is SREVSGIKAA. An N6-acetyllysine mark is found at K78 and K97. Residues 81–218 form a coil 1B region; sequence YEAELGDARK…NIYSEELRET (138 aa). K97 is covalently cross-linked (Glycyl lysine isopeptide (Lys-Gly) (interchain with G-Cter in SUMO2)). S107 carries the post-translational modification Phosphoserine. N6-acetyllysine occurs at positions 108, 114, 123, 135, 144, and 155. K171 carries the N6-acetyllysine; alternate modification. An N6-succinyllysine; alternate modification is found at K171. K171 participates in a covalent cross-link: Glycyl lysine isopeptide (Lys-Gly) (interchain with G-Cter in SUMO2); alternate. An N6-acetyllysine mark is found at K180, K201, and K208. Residue K201 forms a Glycyl lysine isopeptide (Lys-Gly) (interchain with G-Cter in SUMO2); alternate linkage. Residue K201 forms a Glycyl lysine isopeptide (Lys-Gly) (interchain with G-Cter in SUMO); alternate linkage. Residue K208 forms a Glycyl lysine isopeptide (Lys-Gly) (interchain with G-Cter in SUMO2) linkage. At S212 the chain carries Phosphoserine. Glycyl lysine isopeptide (Lys-Gly) (interchain with G-Cter in SUMO2) cross-links involve residues K219 and K233. The interval 219–242 is linker 2; the sequence is KRRHETRLVEIDNGKQREFESRLA. N6-acetyllysine is present on residues K233, K260, K265, and K270. The tract at residues 243-383 is coil 2; that stretch reads DALQELRAQH…HAYRKLLEGE (141 aa). K260 participates in a covalent cross-link: Glycyl lysine isopeptide (Lys-Gly) (interchain with G-Cter in SUMO2); alternate. A Glycyl lysine isopeptide (Lys-Gly) (interchain with G-Cter in SUMO2); alternate cross-link involves residue K270. Phosphoserine is present on residues S277, S282, S301, and S307. A Glycyl lysine isopeptide (Lys-Gly) (interchain with G-Cter in SUMO2); alternate cross-link involves residue K311. 3 positions are modified to N6-acetyllysine: K311, K316, and K341. Residues K366 and K378 each participate in a glycyl lysine isopeptide (Lys-Gly) (interchain with G-Cter in SUMO2) cross-link. The disordered stretch occupies residues 384–442; sequence EERLRLSPSPTSQRSRGRASSHSSQSQGGGSVTKKRKLESSESRSSFSQHARTSGRVAV. The tail stretch occupies residues 384 to 665; it reads EERLRLSPSP…TQSSQNCSIM (282 aa). A phosphoserine mark is found at S390, S392, S395, S398, S403, S404, S406, S407, S409, and S414. Low complexity predominate over residues 395–409; the sequence is SQRSRGRASSHSSQS. A Phosphothreonine modification is found at T416. K417 carries the post-translational modification N6-acetyllysine. Glycyl lysine isopeptide (Lys-Gly) (interchain with G-Cter in SUMO2) cross-links involve residues K417 and K420. Residues 417 to 422 carry the Nuclear localization signal motif; it reads KKRKLE. S423, S426, S429, and S431 each carry phosphoserine. One can recognise an LTD domain in the interval 428-545; the sequence is SSFSQHARTS…EEVAMRKLVR (118 aa). K450 participates in a covalent cross-link: Glycyl lysine isopeptide (Lys-Gly) (interchain with G-Cter in SUMO2); alternate. N6-acetyllysine occurs at positions 450 and 457. Phosphoserine occurs at positions 458 and 463. Residues K470 and K486 each participate in a glycyl lysine isopeptide (Lys-Gly) (interchain with G-Cter in SUMO2) cross-link. Position 486 is an N6-acetyllysine (K486). The residue at position 496 (T496) is a Phosphothreonine. S500 carries the phosphoserine modification. T505 and T510 each carry phosphothreonine. S546 is subject to Phosphoserine. T548 is modified (phosphothreonine). A compositionally biased stretch (acidic residues) spans 552–561; it reads DNDDEEEDGD. The disordered stretch occupies residues 552-577; that stretch reads DNDDEEEDGDELLHHHRGSHCSSSGD. 2 positions are modified to phosphoserine: S570 and S573. K599 is covalently cross-linked (Glycyl lysine isopeptide (Lys-Gly) (interchain with G-Cter in SUMO2); alternate). K599 is covalently cross-linked (Glycyl lysine isopeptide (Lys-Gly) (interchain with G-Cter in SUMO1); alternate). Residues S613, S614, S617, and S620 each carry the phosphoserine modification. 2 O-linked (GlcNAc) serine glycosylation sites follow: S626 and S629. Phosphoserine is present on residues S629, S633, S637, and S653. Residues 648–662 constitute a propeptide, removed in Lamin-A/C form; the sequence is LLGNSSPRTQSSQNC. C662 carries the cysteine methyl ester modification. C662 carries the S-farnesyl cysteine lipid modification. Residues 663 to 665 constitute a propeptide, removed in Prelamin-A/C form and in Lamin-A/C form; it reads SIM.

Belongs to the intermediate filament family. Homodimer of lamin A and lamin C. Lamin dimers then assemble into dimeric head-to-tail polymers. Ultimately, two head-to-tail polymers assemble laterally into a protofilament with a uniformly shaped rod of 3.5 nm in diameter. Interacts with lamin-associated polypeptides IA, IB and TMPO-alpha, RB1 and with emerin. Interacts with SREBF1, SREBF2, SUN2 and TMEM43. Interacts with TMEM201. Proteolytically processed isoform A interacts with NARF. Interacts with SUN1. Interacts with MLIP. Interacts with DMPK; may regulate nuclear envelope stability. Interacts with SUV39H1; the interaction increases stability of SUV39H1. Interacts with SYNE2. Interacts with ITSN1 isoform 2. Interacts with IFFO1; enables the formation of an interior nucleoskeleton that is recruited to DNA double-strand breaks. As to quaternary structure, interacts with EMD. In terms of assembly, interacts (via C-terminus) with LEMD2 (via N-terminus) (in vitro). Post-translationally, proteolytic cleavage of the C-terminal of 18 residues of prelamin-A/C results in the production of lamin-A/C. The prelamin-A/C maturation pathway includes farnesylation of CAAX motif by protein farnesyltransferase (FNTA and FNTB), removal of the last three amino acids (-AAX) by RCE1/FACE2 and/or ZMPSTE24, methylation of the C-terminal cysteine by ICMT and endoproteolytic removal of the last 15 C-terminal amino acids by ZMPSTE24. Proteolytic cleavage requires prior farnesylation and methylation, and absence of these blocks cleavage. In terms of processing, farnesylation of prelamin-A/C facilitates nuclear envelope targeting. Phosphorylation plays a key role in lamin organization, subcellular localization and nuclear envelope disintegration. Phosphorylation by CDK1 at Ser-22 and Ser-392 at the onset of mitosis drives lamin disassembly and nuclear envelope breakdown. Phosphorylation at Ser-22 and Ser-392 during interphase promotes localization to the nucleoplasm and regulates lamina assembly. Phosphorylation at Ser-22, Ser-392 and Ser-629 during interphase causes redistribution between the nucleus and the cytoplasm. Phosphorylation at Ser-22 by CDK1 regulates matrix stiffness. Phosphorylation status of Ser-22 determines its localization between double-strand break (DSB) sites and the nuclear matrix. Phosphorylated by ATR at Ser-282 in response to DNA damage, leading to lamin disassembly and nuclear envelope rupture. Phosphorylation also regulates stability in micronuclei arising from genome instability: phosphorylation at Ser-395 by ATR in response to genome instability and double-stranded DNA breaks primes LMNA for subsequent phosphorylation at Ser-392 by CDK1 and micronuclei envelope rupture. The rupture of micronuclear envelope triggers the cGAS-STING pathway thereby activating the type I interferon response and innate immunity. Post-translationally, acetylation by KAT8 is required for nuclear architecture. In terms of processing, sumoylation is necessary for the localization to the nuclear envelope.

It localises to the nucleus lamina. The protein localises to the nucleus envelope. The protein resides in the nucleus. It is found in the nucleoplasm. Its subcellular location is the nucleus matrix. In terms of biological role, lamins are intermediate filament proteins that assemble into a filamentous meshwork, and which constitute the major components of the nuclear lamina, a fibrous layer on the nucleoplasmic side of the inner nuclear membrane. Lamins provide a framework for the nuclear envelope, bridging the nuclear envelope and chromatin, thereby playing an important role in nuclear assembly, chromatin organization, nuclear membrane and telomere dynamics. Lamin A and C also regulate matrix stiffness by conferring nuclear mechanical properties. The structural integrity of the lamina is strictly controlled by the cell cycle, as seen by the disintegration and formation of the nuclear envelope in prophase and telophase, respectively. Lamin A and C are present in equal amounts in the lamina of mammals. Also invoved in DNA repair: recruited by DNA repair proteins XRCC4 and IFFO1 to the DNA double-strand breaks (DSBs) to prevent chromosome translocation by immobilizing broken DNA ends. Required for normal development of peripheral nervous system and skeletal muscle and for muscle satellite cell proliferation. Required for osteoblastogenesis and bone formation. Also prevents fat infiltration of muscle and bone marrow, helping to maintain the volume and strength of skeletal muscle and bone. Required for cardiac homeostasis. Functionally, prelamin-A/C can accelerate smooth muscle cell senescence. It acts to disrupt mitosis and induce DNA damage in vascular smooth muscle cells (VSMCs), leading to mitotic failure, genomic instability, and premature senescence. In Rattus norvegicus (Rat), this protein is Prelamin-A/C (Lmna).